A 94-amino-acid polypeptide reads, in one-letter code: uncharacterized protein (94 aa).

This is an uncharacterized protein from Saccharomyces cerevisiae (strain ATCC 204508 / S288c) (Baker's yeast).